Reading from the N-terminus, the 326-residue chain is tRNA dimethylallyltransferase (326 aa).

Residue 18-25 (GPTASGKS) coordinates ATP. Residue 20–25 (TASGKS) participates in substrate binding. Interaction with substrate tRNA regions lie at residues 43-46 (DSMQ) and 167-171 (QRIAR).

Belongs to the IPP transferase family. As to quaternary structure, monomer. The cofactor is Mg(2+).

The enzyme catalyses adenosine(37) in tRNA + dimethylallyl diphosphate = N(6)-dimethylallyladenosine(37) in tRNA + diphosphate. Its function is as follows. Catalyzes the transfer of a dimethylallyl group onto the adenine at position 37 in tRNAs that read codons beginning with uridine, leading to the formation of N6-(dimethylallyl)adenosine (i(6)A). In Rhodospirillum rubrum (strain ATCC 11170 / ATH 1.1.1 / DSM 467 / LMG 4362 / NCIMB 8255 / S1), this protein is tRNA dimethylallyltransferase.